Reading from the N-terminus, the 542-residue chain is Protein GDAP2 homolog (542 aa).

Positions 58-237 (RSPFPLSKDV…TYEVLAPLYF (180 aa)) constitute a Macro domain. The disordered stretch occupies residues 277-304 (PQHSVHMRHGHTDDDSDVSPHDMEGNSS). Positions 286 to 300 (GHTDDDSDVSPHDME) are enriched in basic and acidic residues. The CRAL-TRIO domain occupies 373 to 530 (QVEDLTEVSG…YITEYDMATN (158 aa)).

Belongs to the GDAP2 family.

This chain is Protein GDAP2 homolog, found in Drosophila pseudoobscura pseudoobscura (Fruit fly).